Consider the following 361-residue polypeptide: Large ribosomal subunit protein mL45 (361 aa).

A disordered region spans residues 319–361 (EPPKELSAGDAEVKQVDSVGEQSKEQLPLATPVESHTKPSLAI).

It belongs to the mitochondrion-specific ribosomal protein mL45 family.

The protein resides in the mitochondrion. This Drosophila melanogaster (Fruit fly) protein is Large ribosomal subunit protein mL45 (mRpL45).